Here is a 253-residue protein sequence, read N- to C-terminus: Tetraspanin-11 (253 aa).

Transmembrane regions (helical) follow at residues 19–39, 63–83, 90–110, and 220–240; these read LLFI…AVGV, ILIF…GAVI, LSAY…AGVL, and LLLM…GMIL.

The protein belongs to the tetraspanin (TM4SF) family.

The protein localises to the membrane. This Bos taurus (Bovine) protein is Tetraspanin-11 (TSPAN11).